Consider the following 436-residue polypeptide: Histidinol dehydrogenase (436 aa).

The substrate site is built by serine 242, glutamine 264, and histidine 267. Residues glutamine 264 and histidine 267 each contribute to the Zn(2+) site. Active-site proton acceptor residues include glutamate 332 and histidine 333. Substrate contacts are provided by histidine 333, aspartate 366, glutamate 420, and histidine 425. Residue aspartate 366 coordinates Zn(2+). A Zn(2+)-binding site is contributed by histidine 425.

It belongs to the histidinol dehydrogenase family. Requires Zn(2+) as cofactor.

It catalyses the reaction L-histidinol + 2 NAD(+) + H2O = L-histidine + 2 NADH + 3 H(+). The protein operates within amino-acid biosynthesis; L-histidine biosynthesis; L-histidine from 5-phospho-alpha-D-ribose 1-diphosphate: step 9/9. In terms of biological role, catalyzes the sequential NAD-dependent oxidations of L-histidinol to L-histidinaldehyde and then to L-histidine. This chain is Histidinol dehydrogenase, found in Nitratidesulfovibrio vulgaris (strain ATCC 29579 / DSM 644 / CCUG 34227 / NCIMB 8303 / VKM B-1760 / Hildenborough) (Desulfovibrio vulgaris).